We begin with the raw amino-acid sequence, 156 residues long: Peptidyl-prolyl cis-trans isomerase H (156 aa).

In terms of domain architecture, PPIase cyclophilin-type spans 1-155; the sequence is TPAGRLKCEL…MAVRITQCGE (155 aa).

Belongs to the cyclophilin-type PPIase family. PPIase H subfamily.

The protein localises to the nucleus. The enzyme catalyses [protein]-peptidylproline (omega=180) = [protein]-peptidylproline (omega=0). Its function is as follows. PPIases accelerate the folding of proteins. It catalyzes the cis-trans isomerization of proline imidic peptide bonds in oligopeptides. This is Peptidyl-prolyl cis-trans isomerase H (CYP3) from Mycosarcoma maydis (Corn smut fungus).